The primary structure comprises 188 residues: Probable nicotinate-nucleotide adenylyltransferase (188 aa).

It belongs to the NadD family.

It carries out the reaction nicotinate beta-D-ribonucleotide + ATP + H(+) = deamido-NAD(+) + diphosphate. It functions in the pathway cofactor biosynthesis; NAD(+) biosynthesis; deamido-NAD(+) from nicotinate D-ribonucleotide: step 1/1. Functionally, catalyzes the reversible adenylation of nicotinate mononucleotide (NaMN) to nicotinic acid adenine dinucleotide (NaAD). In Salinispora tropica (strain ATCC BAA-916 / DSM 44818 / JCM 13857 / NBRC 105044 / CNB-440), this protein is Probable nicotinate-nucleotide adenylyltransferase.